The following is a 502-amino-acid chain: Bone morphogenetic protein receptor type-1B (502 aa).

Residues 1-13 (MLLRSAGKLNVGT) form the signal peptide. The tract at residues 1–25 (MLLRSAGKLNVGTKKEDGESTAPTP) is disordered. The Extracellular segment spans residues 14 to 126 (KKEDGESTAP…DFVDGPIHHR (113 aa)). 5 disulfides stabilise this stretch: Cys32-Cys53, Cys34-Cys38, Cys47-Cys71, Cys81-Cys95, and Cys96-Cys102. A helical membrane pass occupies residues 127-148 (ALLISVTVCSLLLVLIILFCYF). The Cytoplasmic portion of the chain corresponds to 149–502 (RYKRQETRPR…KMSESQDIKL (354 aa)). Residues 174 to 203 (ESLRDLIEQSQSSGSGSGLPLLVQRTIAKQ) form the GS domain. In terms of domain architecture, Protein kinase spans 204–494 (IQMVKQIGKG…LRVKKTLAKM (291 aa)). ATP is bound by residues 210–218 (IGKGRYGEV) and Lys231. The active-site Proton acceptor is Asp332.

This sequence belongs to the protein kinase superfamily. TKL Ser/Thr protein kinase family. TGFB receptor subfamily. Interacts with high affinity with GDF5; positively regulates chondrocyte differentiation. Interacts with SCUBE3. Interacts with TSC22D1/TSC-22. Interacts with TGFBR3. The cofactor is Mg(2+). Requires Mn(2+) as cofactor. Autophosphorylated.

The protein localises to the cell membrane. The catalysed reaction is L-threonyl-[receptor-protein] + ATP = O-phospho-L-threonyl-[receptor-protein] + ADP + H(+). The enzyme catalyses L-seryl-[receptor-protein] + ATP = O-phospho-L-seryl-[receptor-protein] + ADP + H(+). Its function is as follows. On ligand binding, forms a receptor complex consisting of two type II and two type I transmembrane serine/threonine kinases. Type II receptors phosphorylate and activate type I receptors which autophosphorylate, then bind and activate SMAD transcriptional regulators. Receptor for BMP7/OP-1 and GDF5. Positively regulates chondrocyte differentiation through GDF5 interaction. The protein is Bone morphogenetic protein receptor type-1B (BMPR1B) of Homo sapiens (Human).